The sequence spans 148 residues: MVMVLSPLLLVFILGLGLTPVAPAQDDYRYIHFLTQHYDAKPKGRNDEYCFNMMKNRRLTRPCKDRNTFIHGNKNDIKAICEDRNGQPYRGDLRISKSEFQITICKHKGGSSRPPCRYGATEDSRVIVVGCENGLPVHFDESFITPRH.

Residues 1–23 (MVMVLSPLLLVFILGLGLTPVAP) form the signal peptide. Histidine 37 (proton acceptor) is an active-site residue. Residue arginine 45 coordinates tRNA. 3 disulfides stabilise this stretch: cysteine 50-cysteine 105, cysteine 63-cysteine 116, and cysteine 81-cysteine 131. The Nucleolar localization signal motif lies at 55–59 (KNRRL). TRNA contacts are provided by cysteine 105 and isoleucine 127. The active-site Proton donor is histidine 138.

The protein belongs to the pancreatic ribonuclease family. As to quaternary structure, homodimer. Interacts with RNH1; inhibiting ANG ribonuclease activity. Serum and milk.

The protein resides in the secreted. It localises to the nucleus. It is found in the nucleolus. Its subcellular location is the cytoplasm. The protein localises to the stress granule. Its function is as follows. Secreted ribonuclease that can either promote or restrict cell proliferation of target cells, depending on the context. Endocytosed in target cells via its receptor PLXNB2 and translocates to the cytoplasm or nucleus. Under stress conditions, localizes to the cytoplasm and promotes the assembly of stress granules (SGs): specifically cleaves a subset of tRNAs within anticodon loops to produce tRNA-derived stress-induced fragments (tiRNAs), resulting in translation repression and inhibition of cell proliferation. tiRNas also prevent formation of apoptosome, thereby promoting cell survival. Preferentially cleaves RNAs between a pyrimidine and an adenosine residue, suggesting that it cleaves the anticodon loop of tRNA(Ala) (32-UUAGCAU-38) after positions 33 and 36. Cleaves a subset of tRNAs, including tRNA(Ala), tRNA(Glu), tRNA(Gly), tRNA(Lys), tRNA(Val), tRNA(His), tRNA(Asp) and tRNA(Sec). Under growth conditions and in differentiated cells, translocates to the nucleus and stimulates ribosomal RNA (rRNA) transcription, including that containing the initiation site sequences of 45S rRNA, thereby promoting cell growth and proliferation. Angiogenin induces vascularization of normal and malignant tissues via its ability to promote rRNA transcription. The sequence is that of Angiogenin-1 (ANG1) from Bos taurus (Bovine).